A 590-amino-acid polypeptide reads, in one-letter code: J protein JJJ1 (590 aa).

The J domain occupies 3–72 (TCYYELLGVE…RAWYDSHKEQ (70 aa)). Residues 269-284 (EQRKLKEQQRKNELNN) are compositionally biased toward basic and acidic residues. The tract at residues 269–293 (EQRKLKEQQRKNELNNRRKFGNDNN) is disordered. A C2H2-type 1 zinc finger spans residues 338–362 (YECFICNKTFKSEKQLKNHINTKLH). Ser393 carries the phosphoserine modification. The segment at 441–546 (EVEDVSSDEN…TLPSSMSPTS (106 aa)) is disordered. Residues 455 to 467 (TKNKKKRKKKKKA) show a composition bias toward basic residues. The span at 480–489 (DDTKDKRSNE) shows a compositional bias: basic and acidic residues. Thr504 carries the post-translational modification Phosphothreonine. Residues 513–527 (KAKKKKGKQPKKNSK) are compositionally biased toward basic residues. A compositionally biased stretch (low complexity) spans 528–546 (STKSTPSLSTLPSSMSPTS). A C2H2-type 2 zinc finger spans residues 549–573 (EVCTTCGESFDSRNKLFNHVKIAGH).

The protein localises to the nucleus. This Saccharomyces cerevisiae (strain ATCC 204508 / S288c) (Baker's yeast) protein is J protein JJJ1 (JJJ1).